Reading from the N-terminus, the 324-residue chain is Mitochondrial oxaloacetate transport protein (324 aa).

3 Solcar repeats span residues 20–111, 126–218, and 227–312; these read ISKF…IRSS, QSVG…AKNI, and DGPA…TMKL. A run of 6 helical transmembrane segments spans residues 26–46, 79–99, 132–152, 193–213, 233–253, and 284–305; these read FVAG…IELI, GIKG…GLNG, VFSG…LFLV, GIDA…PIYN, LTAS…WDVI, and LYKG…CLTF.

This sequence belongs to the mitochondrial carrier (TC 2.A.29) family.

Its subcellular location is the mitochondrion inner membrane. It catalyses the reaction a dicarboxylate(in) + sulfate(out) = a dicarboxylate(out) + sulfate(in). The enzyme catalyses (2S)-2-isopropylmalate(in) + sulfate(out) = (2S)-2-isopropylmalate(out) + sulfate(in). The catalysed reaction is (2R,3S)-3-isopropylmalate(in) + sulfate(out) = (2R,3S)-3-isopropylmalate(out) + sulfate(in). It carries out the reaction malonate(in) + sulfate(out) = malonate(out) + sulfate(in). It catalyses the reaction oxaloacetate(in) + sulfate(out) = oxaloacetate(out) + sulfate(in). The enzyme catalyses thiosulfate(in) + sulfate(out) = thiosulfate(out) + sulfate(in). Its activity is regulated as follows. Inhibited by alpha-keto isocaproate, an intermediate of leucine biosynthesis pathway. Functionally, antiporter that exchanges dicarboxylates and sulfur oxoanions across the inner membrane of mitochondria. Exports alpha-isopropylmalate from mitochondrial matrix to the cytosol, where it serves as a precursor for leucine biosynthesis. In Saccharomyces cerevisiae (strain ATCC 204508 / S288c) (Baker's yeast), this protein is Mitochondrial oxaloacetate transport protein (OAC1).